Reading from the N-terminus, the 841-residue chain is Protein translocase subunit SecA (841 aa).

Residues glutamine 87, 105 to 109 (GEGKT), and aspartate 494 contribute to the ATP site. Residues cysteine 825, cysteine 827, cysteine 836, and cysteine 837 each contribute to the Zn(2+) site.

The protein belongs to the SecA family. In terms of assembly, monomer and homodimer. Part of the essential Sec protein translocation apparatus which comprises SecA, SecYEG and auxiliary proteins SecDF-YajC and YidC. Zn(2+) serves as cofactor.

Its subcellular location is the cell inner membrane. The protein localises to the cytoplasm. The catalysed reaction is ATP + H2O + cellular proteinSide 1 = ADP + phosphate + cellular proteinSide 2.. Its function is as follows. Part of the Sec protein translocase complex. Interacts with the SecYEG preprotein conducting channel. Has a central role in coupling the hydrolysis of ATP to the transfer of proteins into and across the cell membrane, serving as an ATP-driven molecular motor driving the stepwise translocation of polypeptide chains across the membrane. This chain is Protein translocase subunit SecA, found in Syntrophus aciditrophicus (strain SB).